Consider the following 622-residue polypeptide: 3-(3-hydroxy-phenyl)propionate/3-hydroxycinnamic acid hydroxylase (622 aa).

FAD contacts are provided by residues 20-49 (DVAIIGAGPVGLMIANYLGLQGVRVVVLEK) and 288-298 (FRVDRVLLAGD).

This sequence belongs to the PheA/TfdB FAD monooxygenase family. It depends on FAD as a cofactor.

It catalyses the reaction 3-(3-hydroxyphenyl)propanoate + NADH + O2 + H(+) = 3-(2,3-dihydroxyphenyl)propanoate + NAD(+) + H2O. The catalysed reaction is (2E)-3-(3-hydroxyphenyl)prop-2-enoate + NADH + O2 + H(+) = (2E)-3-(2,3-dihydroxyphenyl)prop-2-enoate + NAD(+) + H2O. Its pathway is aromatic compound metabolism; 3-phenylpropanoate degradation. Its function is as follows. Catalyzes the insertion of one atom of molecular oxygen into position 2 of the phenyl ring of 3-(3-hydroxyphenyl)propionate (3-HPP) and hydroxycinnamic acid (3HCI). The polypeptide is 3-(3-hydroxy-phenyl)propionate/3-hydroxycinnamic acid hydroxylase (Paraburkholderia xenovorans (strain LB400)).